The following is a 234-amino-acid chain: Interleukin-34 (234 aa).

The first 20 residues, 1–20, serve as a signal peptide directing secretion; it reads MPQGLAWLRYLGILLGMALG. N76 carries an N-linked (GlcNAc...) asparagine glycan. The interval 191–234 is disordered; that stretch reads EAPQPQPRSPASAQCEAAQLYPLPQPPSTSLPRVLGPSAGPPTQ.

This sequence belongs to the IL-34 family. In terms of assembly, homodimer. Interacts with CSF1R.

The protein localises to the secreted. Cytokine that promotes the proliferation, survival and differentiation of monocytes and macrophages. Promotes the release of pro-inflammatory chemokines, and thereby plays an important role in innate immunity and in inflammatory processes. Plays an important role in the regulation of osteoclast proliferation and differentiation, and in the regulation of bone resorption. Signaling via CSF1R and its downstream effectors stimulates phosphorylation of MAPK1/ERK2 AND MAPK3/ERK1. The chain is Interleukin-34 from Bos taurus (Bovine).